Reading from the N-terminus, the 591-residue chain is Formate--tetrahydrofolate ligase (591 aa).

Residue T74–S81 participates in ATP binding.

Belongs to the formate--tetrahydrofolate ligase family.

The enzyme catalyses (6S)-5,6,7,8-tetrahydrofolate + formate + ATP = (6R)-10-formyltetrahydrofolate + ADP + phosphate. The protein operates within one-carbon metabolism; tetrahydrofolate interconversion. The polypeptide is Formate--tetrahydrofolate ligase (Desulfovibrio desulfuricans (strain ATCC 27774 / DSM 6949 / MB)).